Here is a 149-residue protein sequence, read N- to C-terminus: Large ribosomal subunit protein eL19 (149 aa).

The segment at 45-94 (VADGTIDAEDTQGNSRGRARERDAKESYGHKKGAGSRKGKAGARQNEKRE) is disordered. Over residues 62 to 73 (RARERDAKESYG) the composition is skewed to basic and acidic residues. Positions 74-85 (HKKGAGSRKGKA) are enriched in basic residues.

It belongs to the eukaryotic ribosomal protein eL19 family. Part of the 50S ribosomal subunit.

Functionally, binds to the 23S rRNA. This is Large ribosomal subunit protein eL19 from Halobacterium salinarum (strain ATCC 700922 / JCM 11081 / NRC-1) (Halobacterium halobium).